The primary structure comprises 256 residues: Thiazole synthase (256 aa).

The active-site Schiff-base intermediate with DXP is the lysine 98. 1-deoxy-D-xylulose 5-phosphate contacts are provided by residues glycine 159, 185–186 (AG), and 207–208 (NT).

Belongs to the ThiG family. As to quaternary structure, homotetramer. Forms heterodimers with either ThiH or ThiS.

It localises to the cytoplasm. The enzyme catalyses [ThiS sulfur-carrier protein]-C-terminal-Gly-aminoethanethioate + 2-iminoacetate + 1-deoxy-D-xylulose 5-phosphate = [ThiS sulfur-carrier protein]-C-terminal Gly-Gly + 2-[(2R,5Z)-2-carboxy-4-methylthiazol-5(2H)-ylidene]ethyl phosphate + 2 H2O + H(+). It participates in cofactor biosynthesis; thiamine diphosphate biosynthesis. Functionally, catalyzes the rearrangement of 1-deoxy-D-xylulose 5-phosphate (DXP) to produce the thiazole phosphate moiety of thiamine. Sulfur is provided by the thiocarboxylate moiety of the carrier protein ThiS. In vitro, sulfur can be provided by H(2)S. This chain is Thiazole synthase, found in Aliivibrio fischeri (strain MJ11) (Vibrio fischeri).